The primary structure comprises 113 residues: Small ribosomal subunit protein uS15 (113 aa).

The protein belongs to the universal ribosomal protein uS15 family. As to quaternary structure, part of the 30S ribosomal subunit. Forms a bridge to the 50S subunit in the 70S ribosome, contacting the 23S rRNA.

Functionally, one of the primary rRNA binding proteins, it binds directly to 16S rRNA where it helps nucleate assembly of the platform of the 30S subunit by binding and bridging several RNA helices of the 16S rRNA. Its function is as follows. Forms an intersubunit bridge (bridge B4) with the 23S rRNA of the 50S subunit in the ribosome. The sequence is that of Small ribosomal subunit protein uS15 from Haemophilus influenzae (strain PittEE).